We begin with the raw amino-acid sequence, 706 residues long: Histone deacetylase HDA1 (706 aa).

The segment covering 1 to 24 has biased composition (basic and acidic residues); sequence MDSVMVKKEVLENPDHDLKRKLEE. A disordered region spans residues 1–36; sequence MDSVMVKKEVLENPDHDLKRKLEENKEEENSLSTTS. The interval 67–396 is histone deacetylase; it reads RYHAKIFTSY…ALSVAKVLIG (330 aa). His206 is an active-site residue.

This sequence belongs to the histone deacetylase family. HD type 2 subfamily.

It localises to the nucleus. It carries out the reaction N(6)-acetyl-L-lysyl-[histone] + H2O = L-lysyl-[histone] + acetate. Responsible for the deacetylation of lysine residues on the N-terminal part of the core histones (H2A, H2B, H3 and H4). Histone deacetylation gives a tag for epigenetic repression and plays an important role in transcriptional regulation, cell cycle progression and developmental events. Histone deacetylases act via the formation of large multiprotein complexes. The sequence is that of Histone deacetylase HDA1 (HDA1) from Saccharomyces cerevisiae (strain ATCC 204508 / S288c) (Baker's yeast).